A 207-amino-acid chain; its full sequence is Outer-membrane lipoprotein LolB (207 aa).

The signal sequence occupies residues 1-21 (MTLPDFRLIRLLPLASLVLTA). A lipid anchor (N-palmitoyl cysteine) is attached at Cys22. A lipid anchor (S-diacylglycerol cysteine) is attached at Cys22.

The protein belongs to the LolB family. As to quaternary structure, monomer.

The protein resides in the cell outer membrane. In terms of biological role, plays a critical role in the incorporation of lipoproteins in the outer membrane after they are released by the LolA protein. The protein is Outer-membrane lipoprotein LolB of Citrobacter koseri (strain ATCC BAA-895 / CDC 4225-83 / SGSC4696).